The chain runs to 338 residues: Phosphatidylinositol:ceramide inositolphosphotransferase (338 aa).

The Cytoplasmic segment spans residues 1–36 (MTSHVTAHDVGGNEDIGTDHVPWYKQPLPLCTQVMR). A helical membrane pass occupies residues 37-57 (FILLLLLTVMFLGVAILVANA). Topologically, residues 58–87 (RMPDPEKVRPLPDLLLESIPKVALLENGTN) are extracellular. A helical transmembrane segment spans residues 88-108 (VIIFLLNATTVVVGFKVFLLE). Residues 109 to 116 (RHMNGLPR) lie on the Cytoplasmic side of the membrane. Residues 117–137 (VTFLVGVPKIGSFLNRMAFGV) form a helical membrane-spanning segment. Residues 138–152 (LDSGRRPFPLKNVFP) lie on the Extracellular side of the membrane. Residues 153–173 (IMAIRFLTSYAVVMVFRAFVI) traverse the membrane as a helical segment. The Cytoplasmic portion of the chain corresponds to 174-189 (MGTSYPATDNHCQNPQ). The chain crosses the membrane as a helical span at residues 190-210 (VIEHPVLNVILTLVTLGSGAI). The Extracellular portion of the chain corresponds to 211–222 (HCGDLMFSGHTM). H220 is a catalytic residue. Residues 223 to 243 (ILSLAFILAWDYSPFLHPWAV) form a helical membrane-spanning segment. At 244 to 338 (RVWVSVLLPI…TDASAALPEH (95 aa)) the chain is on the cytoplasmic side. Residues H264 and D268 contribute to the active site.

The protein belongs to the sphingomyelin synthase family.

It localises to the membrane. In terms of biological role, bidirectional lipid inositolphosphotransferase capable of converting phosphatidylinositol (PI) and ceramide to inositol-phosphorylceramide (IPC) and diacylglycerol (DAG) and vice versa. Direction is dependent on the relative concentrations of DAG and ceramide as phosphoinositol acceptors. Essential for viability of the pathogenic bloodstream stage of this human protozoan parasite and, consequently, can be considered as potential drug target. This is Phosphatidylinositol:ceramide inositolphosphotransferase from Leishmania major.